Here is a 241-residue protein sequence, read N- to C-terminus: Biosynthetic peptidoglycan transglycosylase (241 aa).

A helical transmembrane segment spans residues 18-38 (GVIGIIALWMAGILIFAFLPV).

Belongs to the glycosyltransferase 51 family.

The protein localises to the cell inner membrane. It catalyses the reaction [GlcNAc-(1-&gt;4)-Mur2Ac(oyl-L-Ala-gamma-D-Glu-L-Lys-D-Ala-D-Ala)](n)-di-trans,octa-cis-undecaprenyl diphosphate + beta-D-GlcNAc-(1-&gt;4)-Mur2Ac(oyl-L-Ala-gamma-D-Glu-L-Lys-D-Ala-D-Ala)-di-trans,octa-cis-undecaprenyl diphosphate = [GlcNAc-(1-&gt;4)-Mur2Ac(oyl-L-Ala-gamma-D-Glu-L-Lys-D-Ala-D-Ala)](n+1)-di-trans,octa-cis-undecaprenyl diphosphate + di-trans,octa-cis-undecaprenyl diphosphate + H(+). Its pathway is cell wall biogenesis; peptidoglycan biosynthesis. Functionally, peptidoglycan polymerase that catalyzes glycan chain elongation from lipid-linked precursors. The chain is Biosynthetic peptidoglycan transglycosylase from Yersinia pseudotuberculosis serotype IB (strain PB1/+).